We begin with the raw amino-acid sequence, 225 residues long: Membrane protein (225 aa).

Residues Met-1–Glu-20 are Virion surface-facing. A helical transmembrane segment spans residues Tyr-21 to Ala-41. At Thr-42–Lys-51 the chain is on the intravirion side. Residues Met-52 to Tyr-72 form a helical membrane-spanning segment. The Virion surface segment spans residues Pro-73 to Gly-77. Residues Gly-78 to Ile-98 form a helical membrane-spanning segment. The Intravirion segment spans residues Gln-99–Thr-225.

This sequence belongs to the gammacoronaviruses M protein family. In terms of assembly, homomultimer. Interacts with envelope E protein in the budding compartment of the host cell, which is located between endoplasmic reticulum and the Golgi complex. Forms a complex with HE and S proteins. Interacts with nucleocapsid N protein. This interaction probably participates in RNA packaging into the virus.

It is found in the virion membrane. The protein localises to the host Golgi apparatus membrane. In terms of biological role, component of the viral envelope that plays a central role in virus morphogenesis and assembly via its interactions with other viral proteins. This is Membrane protein from Gallus gallus (Chicken).